The sequence spans 255 residues: Pyridoxine 5'-phosphate synthase (255 aa).

Positions 8 and 19 each coordinate 3-amino-2-oxopropyl phosphate. H44 serves as the catalytic Proton acceptor. Residues R46 and H51 each contribute to the 1-deoxy-D-xylulose 5-phosphate site. E74 (proton acceptor) is an active-site residue. Residue T111 participates in 1-deoxy-D-xylulose 5-phosphate binding. H202 serves as the catalytic Proton donor. Residues D203 and 225 to 226 contribute to the 3-amino-2-oxopropyl phosphate site; that span reads GH.

The protein belongs to the PNP synthase family. Homooctamer; tetramer of dimers.

Its subcellular location is the cytoplasm. It carries out the reaction 3-amino-2-oxopropyl phosphate + 1-deoxy-D-xylulose 5-phosphate = pyridoxine 5'-phosphate + phosphate + 2 H2O + H(+). The protein operates within cofactor biosynthesis; pyridoxine 5'-phosphate biosynthesis; pyridoxine 5'-phosphate from D-erythrose 4-phosphate: step 5/5. Catalyzes the complicated ring closure reaction between the two acyclic compounds 1-deoxy-D-xylulose-5-phosphate (DXP) and 3-amino-2-oxopropyl phosphate (1-amino-acetone-3-phosphate or AAP) to form pyridoxine 5'-phosphate (PNP) and inorganic phosphate. The chain is Pyridoxine 5'-phosphate synthase from Xanthomonas axonopodis pv. citri (strain 306).